Consider the following 440-residue polypeptide: MARLVLGLVSCTFFLAVSGLYSSSDDVIELTPSNFNREVIQSDGLWLVEFYAPWCGHCQRLTPEWKKAATALKDVVKVGAVNADKHQSLGGQYGVQGFPTIKIFGANKNKPEDYQGGRTGEAIVDAALSALRQLVKDRLGGRSGGYSSGKQGRGDSSSKKDVVELTDDTFDKNVLDSEDVWMVEFYAPWCGHCKNLEPEWAAAATEVKEQTKGKVKLAAVDATVNQVLASRYGIKGFPTIKIFQKGESPVDYDGGRTRSDIVSRALDLFSDNAPPPELLEIINEDIAKKTCEEHQLCVVAVLPHILDTGAAGRNSYLEVLLKLADKYKKKMWGWLWTEAGAQYELENALGIGGFGYPAMAAINARKMKFALLKGSFSEQGINEFLRELSFGRGSTAPVGGGSFPTITPREPWDGKDGELPVEDDIDLSDVELDDLEKDEL.

The N-terminal stretch at 1–19 is a signal peptide; that stretch reads MARLVLGLVSCTFFLAVSG. Thioredoxin domains follow at residues 20–133 and 151–287; these read LYSS…ALRQ and QGRG…EDIA. A disulfide bond links Cys55 and Cys58. Phosphoserine is present on residues Ser129, Ser156, and Ser158. Positions 139–161 are disordered; sequence LGGRSGGYSSGKQGRGDSSSKKD. A compositionally biased stretch (basic and acidic residues) spans 152–161; it reads GRGDSSSKKD. An intrachain disulfide couples Cys190 to Cys193. Residues 399–440 form a disordered region; it reads GGGSFPTITPREPWDGKDGELPVEDDIDLSDVELDDLEKDEL. Residues 419-440 are compositionally biased toward acidic residues; sequence LPVEDDIDLSDVELDDLEKDEL. A Phosphoserine modification is found at Ser428. Residues 437–440 carry the Prevents secretion from ER motif; the sequence is KDEL.

It belongs to the protein disulfide isomerase family. Part of a large chaperone multiprotein complex comprising DNAJB11, HSP90B1, HSPA5, HYOU, PDIA2, PDIA4, PDIA6, PPIB, SDF2L1, UGGT1 and very small amounts of ERP29, but not, or at very low levels, CALR nor CANX. Interacts with MICA on the surface of tumor cells, leading to MICA disulfide bond reduction which is required for its release from tumor cells. Interacts with ITGB3 following platelet stimulation. Interacts with ERN1; the interaction is direct. Interacts with EIF2AK3.

The protein localises to the endoplasmic reticulum lumen. The protein resides in the cell membrane. It is found in the melanosome. The enzyme catalyses Catalyzes the rearrangement of -S-S- bonds in proteins.. May function as a chaperone that inhibits aggregation of misfolded proteins. Negatively regulates the unfolded protein response (UPR) through binding to UPR sensors such as ERN1, which in turn inactivates ERN1 signaling. May also regulate the UPR via the EIF2AK3 UPR sensor. Plays a role in platelet aggregation and activation by agonists such as convulxin, collagen and thrombin. This chain is Protein disulfide-isomerase A6 (Pdia6), found in Mus musculus (Mouse).